Consider the following 668-residue polypeptide: Potassium voltage-gated channel subfamily KQT member 1 (668 aa).

Topologically, residues 1-119 are cytoplasmic; it reads MDTASSPPSA…YNFLERPTGW (119 aa). A Phosphoserine; by PKA modification is found at Ser-27. Residues 120–141 traverse the membrane as a helical segment; it reads KCFVYHFTVFLIVLVCLIFSVL. Residues 142–152 lie on the Extracellular side of the membrane; sequence STIEQYAALAT. A helical transmembrane segment spans residues 153 to 175; it reads GTLFWMEIVLVVFFGTEYVVRLW. Topologically, residues 176 to 191 are cytoplasmic; that stretch reads SAGCRSKYVGIWGRLR. Residues 192–217 form a helical membrane-spanning segment; that stretch reads FARKPISIIDLIVVVASMVVLCVGSK. Over 218–225 the chain is Extracellular; it reads GQVFATSA. A helical; Voltage-sensor transmembrane segment spans residues 226–241; the sequence is IRGIRFLQILRMLHVD. The tract at residues 237–245 is interaction with KCNE3; sequence MLHVDRQGG. Topologically, residues 242–259 are cytoplasmic; sequence RQGGTWRLLGSVVFIHRQ. Position 243 (Gln-243) interacts with a 1,2-diacyl-sn-glycero-3-phospho-(1D-myo-inositol-4,5-bisphosphate). The helical transmembrane segment at 260–282 threads the bilayer; the sequence is ELITTLYIGFLGLIFSSYFVYLA. Topologically, residues 283 to 298 are extracellular; sequence EKDAVNESGRIEFGSY. N-linked (GlcNAc...) asparagine glycosylation occurs at Asn-288. An intramembrane region (pore-forming) is located at residues 299–319; that stretch reads ADALWWGVVTVTTIGYGDKVP. Residues 320–321 lie on the Extracellular side of the membrane; it reads QT. A helical transmembrane segment spans residues 322-347; the sequence is WVGKTIASCFSVFAISFFALPAGILG. The Cytoplasmic segment spans residues 348-668; sequence SGFALKVQQK…VPQTGPDEGS (321 aa). Residues 369–381 form an interaction with CALM region; the sequence is AAASLIQTAWRCY. A phosphoserine mark is found at Ser-406 and Ser-408. The tract at residues 514–528 is interaction with CALM; calcium-dependent; that stretch reads KVIRRMQYFVAKKKF. The tract at residues 534–571 is interaction with KCNE1 C-terminus; that stretch reads PYDVRDVIEQYSQGHLNLMVRIKELQRRLDQSIGKPSL. Residues 584–620 are a coiled coil; sequence SNTIGARLNRVEDKVTQLDQRLVIITDMLHQLLSMQQ. Residues 587-615 are interaction with AKAP9; the sequence is IGARLNRVEDKVTQLDQRLVIITDMLHQL. The segment at 588 to 619 is C-terminal assembly domain (tetramerization); it reads GARLNRVEDKVTQLDQRLVIITDMLHQLLSMQ.

The protein belongs to the potassium channel family. KQT (TC 1.A.1.15) subfamily. Kv7.1/KCNQ1 sub-subfamily. As to quaternary structure, tetramer. Heterotetramer with KCNE1; form the native cardiac channel I(Ks) which increases the amplitude and slows down the activation kinetics of outward potassium current and targets to the membrane raft. Interacts (via C-terminus) with CALM; forms a heterooctameric structure (with 4:4 KCNQ1:CALM stoichiometry) in a calcium-independent manner. Interacts with AKAP9; targets protein kinase A (PKA) catalytic and regulatory subunits and protein phosphatase 1 (PP1) to the KCNQ1-KCNE1 complex, allowing PKA-mediated phosphorylation and increase of delayed rectifier potassium channel activity. Interacts with KCNE2; form an heterooligomer complex that targets to the membrane raft and leading to currents with an apparently instantaneous activation, a rapid deactivation process and a linear current-voltage relationship and decreases the amplitude of the outward current. Interacts with AP2M1; mediates estrogen-induced internalization via clathrin-coated vesicles. Interacts with NEDD4L; promotes internalization and decreases I(Ks) currents. Interacts with USP2; counteracts the NEDD4L-specific down-regulation of I(Ks) and restore plasma membrane localization. Heterotetramer with KCNQ5; has a voltage-gated potassium channel activity. Interacts with KCNE3; four KCNE3 molecules are bound to one KCNQ1 tetramer (4:4 KCNQ1:KCNE3 stoichiometry); alters membrane raft localization; affects KCNQ1 structure and gating properties. Interacts with KCNE4; impairs KCNQ1 localization in lipid rafts and inhibits voltage-gated potassium channel activity. Interacts with KCNE5; impairs KCNQ1 localization in lipid rafts and only conducts current upon strong and continued depolarization. Interacts with SLC5A3; forms coregulatory channel-transporter complexes that modulate Na(+)-coupled myo-inositol influx through the transporter. Phosphorylation at Ser-27 by PKA; increases delayed rectifier potassium channel activity of the KCNQ1-KCNE1 complex through a macromolecular complex that includes PKA, PP1, and the targeting protein AKAP9. In terms of processing, ubiquitinated by NEDD4L; promotes internalization. The ubiquitinylated form is internalized through a clathrin-mediated endocytosis by interacting with AP2M1 and is recycled back to the cell membrane via RAB4A and RAB11A. Post-translationally, deubiquitinated by USP2; counteracts the NEDD4L-specific down-regulation of I(Ks) and restores the membrane localization. In terms of tissue distribution, expressed in heart, kidney and salivary glands. Detected in the cochlea. Almost undetectable in brain, skeletal muscle and liver. Widely expressed in embryonic and neonatal tissues. Expressed in choroid plexus epithelium (at protein level).

The protein resides in the cell membrane. It is found in the cytoplasmic vesicle membrane. It localises to the early endosome. Its subcellular location is the membrane raft. The protein localises to the endoplasmic reticulum. The protein resides in the basolateral cell membrane. It is found in the apical cell membrane. It catalyses the reaction K(+)(in) = K(+)(out). PIP2 molecule is essential to activate KCNQ channels by inducing the coupling of the voltage-sensing domain (VSD) and the pore-forming domain (PD). Upon channel activation, PIP2 disrupts the VSD-calmodulin/CALM interactions, causing the release of CALM from the VSD which triggers the opening of the gate. Calcium potentiates KCNQ1 channel current through calcium-bound CALM. Calcium-bound CALM competes with PIP2 to stabilize the channel open state. Pore-forming subunit of the voltage-gated potassium (Kv) channel involved in the regulation of cardiomyocyte excitability and important in normal development and functions of myocardium, inner ear, stomach and colon. Associates with KCNE beta subunits that modulates current kinetics. Induces a voltage-dependent by rapidly activating and slowly deactivating potassium-selective outward current. Also promotes a delayed voltage activated potassium current showing outward rectification characteristic. During beta-adrenergic receptor stimulation participates in cardiac increases the amplitude and slows down the activation kinetics of outward potassium current I(Ks). Muscarinic agonist oxotremorine-M strongly suppresses KCNQ1/KCNE1 current. When associated with KCNE3, forms the potassium channel that is important for cyclic AMP-stimulated intestinal secretion of chloride ions. This interaction with KCNE3 is reduced by 17beta-estradiol, resulting in the reduction of currents. During conditions of increased substrate load, maintains the driving force for proximal tubular and intestinal sodium ions absorption, gastric acid secretion, and cAMP-induced jejunal chloride ions secretion. Allows the provision of potassium ions to the luminal membrane of the secretory canaliculus in the resting state as well as during stimulated acid secretion. When associated with KCNE2, forms a heterooligomer complex leading to currents with an apparently instantaneous activation, a rapid deactivation process and a linear current-voltage relationship and decreases the amplitude of the outward current. When associated with KCNE4, inhibits voltage-gated potassium channel activity. When associated with KCNE5, this complex only conducts current upon strong and continued depolarization. Also forms a heterotetramer with KCNQ5; has a voltage-gated potassium channel activity. Binds with phosphatidylinositol 4,5-bisphosphate. KCNQ1-KCNE2 channel associates with Na(+)-coupled myo-inositol symporter in the apical membrane of choroid plexus epithelium and regulates the myo-inositol gradient between blood and cerebrospinal fluid with an impact on neuron excitability. The sequence is that of Potassium voltage-gated channel subfamily KQT member 1 from Mus musculus (Mouse).